A 203-amino-acid chain; its full sequence is LexA repressor (203 aa).

The H-T-H motif DNA-binding region spans 29–49 (VREIGQEVGLSSSSTVHGYLK). Active-site for autocatalytic cleavage activity residues include Ser126 and Lys163.

The protein belongs to the peptidase S24 family. As to quaternary structure, homodimer.

The catalysed reaction is Hydrolysis of Ala-|-Gly bond in repressor LexA.. Its function is as follows. Represses a number of genes involved in the response to DNA damage (SOS response), including recA and lexA. In the presence of single-stranded DNA, RecA interacts with LexA causing an autocatalytic cleavage which disrupts the DNA-binding part of LexA, leading to derepression of the SOS regulon and eventually DNA repair. In Pelotomaculum thermopropionicum (strain DSM 13744 / JCM 10971 / SI), this protein is LexA repressor.